The sequence spans 417 residues: Serine hydroxymethyltransferase (417 aa).

(6S)-5,6,7,8-tetrahydrofolate-binding positions include Leu120 and 124–126; that span reads GHL. Residue Lys229 is modified to N6-(pyridoxal phosphate)lysine. Residue 354 to 356 coordinates (6S)-5,6,7,8-tetrahydrofolate; that stretch reads SPF.

It belongs to the SHMT family. In terms of assembly, homodimer. The cofactor is pyridoxal 5'-phosphate.

It localises to the cytoplasm. The enzyme catalyses (6R)-5,10-methylene-5,6,7,8-tetrahydrofolate + glycine + H2O = (6S)-5,6,7,8-tetrahydrofolate + L-serine. The protein operates within one-carbon metabolism; tetrahydrofolate interconversion. Its pathway is amino-acid biosynthesis; glycine biosynthesis; glycine from L-serine: step 1/1. Catalyzes the reversible interconversion of serine and glycine with tetrahydrofolate (THF) serving as the one-carbon carrier. This reaction serves as the major source of one-carbon groups required for the biosynthesis of purines, thymidylate, methionine, and other important biomolecules. Also exhibits THF-independent aldolase activity toward beta-hydroxyamino acids, producing glycine and aldehydes, via a retro-aldol mechanism. The chain is Serine hydroxymethyltransferase from Acinetobacter radioresistens.